The chain runs to 565 residues: Membrane protein insertase YidC (565 aa).

Transmembrane regions (helical) follow at residues 6-26 (VLLIFSWLTVATLLWMDWSKN), 348-368 (LMALIGQGLFWILSHLNSLLH), 370-390 (WGWAIVGLVVLLRIAMYPLSA), 437-457 (GGCFPILIQMPIFFALYWVLV), 479-499 (PYFILPLLNIVIMWATQKLTP), and 516-536 (PLIFGVMMAFVPSGLALYWVI).

The protein belongs to the OXA1/ALB3/YidC family. Type 1 subfamily. Interacts with the Sec translocase complex via SecD. Specifically interacts with transmembrane segments of nascent integral membrane proteins during membrane integration.

The protein resides in the cell inner membrane. Required for the insertion and/or proper folding and/or complex formation of integral membrane proteins into the membrane. Involved in integration of membrane proteins that insert both dependently and independently of the Sec translocase complex, as well as at least some lipoproteins. Aids folding of multispanning membrane proteins. This chain is Membrane protein insertase YidC, found in Xylella fastidiosa (strain M23).